The chain runs to 348 residues: Fe(3+) ions import ATP-binding protein FbpC (348 aa).

One can recognise an ABC transporter domain in the interval 6-236 (LSLEGATVRF…PADAFVARFL (231 aa)). Position 38–45 (38–45 (GPSGSGKS)) interacts with ATP.

This sequence belongs to the ABC transporter superfamily. Fe(3+) ion importer (TC 3.A.1.10) family. In terms of assembly, the complex is composed of two ATP-binding proteins (FbpC), two transmembrane proteins (FbpB) and a solute-binding protein (FbpA).

It is found in the cell membrane. It catalyses the reaction Fe(3+)(out) + ATP + H2O = Fe(3+)(in) + ADP + phosphate + H(+). Its function is as follows. Part of the ABC transporter complex FbpABC involved in Fe(3+) ions import. Responsible for energy coupling to the transport system. The sequence is that of Fe(3+) ions import ATP-binding protein FbpC from Streptomyces coelicolor (strain ATCC BAA-471 / A3(2) / M145).